A 612-amino-acid polypeptide reads, in one-letter code: Dihydroxy-acid dehydratase (612 aa).

Position 81 (aspartate 81) interacts with Mg(2+). A [2Fe-2S] cluster-binding site is contributed by cysteine 122. Mg(2+) is bound by residues aspartate 123 and lysine 124. The residue at position 124 (lysine 124) is an N6-carboxylysine. Cysteine 195 contributes to the [2Fe-2S] cluster binding site. Position 491 (glutamate 491) interacts with Mg(2+). Catalysis depends on serine 517, which acts as the Proton acceptor.

This sequence belongs to the IlvD/Edd family. Homodimer. Requires [2Fe-2S] cluster as cofactor. Mg(2+) serves as cofactor.

It catalyses the reaction (2R)-2,3-dihydroxy-3-methylbutanoate = 3-methyl-2-oxobutanoate + H2O. The enzyme catalyses (2R,3R)-2,3-dihydroxy-3-methylpentanoate = (S)-3-methyl-2-oxopentanoate + H2O. The protein operates within amino-acid biosynthesis; L-isoleucine biosynthesis; L-isoleucine from 2-oxobutanoate: step 3/4. Its pathway is amino-acid biosynthesis; L-valine biosynthesis; L-valine from pyruvate: step 3/4. Functionally, functions in the biosynthesis of branched-chain amino acids. Catalyzes the dehydration of (2R,3R)-2,3-dihydroxy-3-methylpentanoate (2,3-dihydroxy-3-methylvalerate) into 2-oxo-3-methylpentanoate (2-oxo-3-methylvalerate) and of (2R)-2,3-dihydroxy-3-methylbutanoate (2,3-dihydroxyisovalerate) into 2-oxo-3-methylbutanoate (2-oxoisovalerate), the penultimate precursor to L-isoleucine and L-valine, respectively. In Haemophilus influenzae (strain PittGG), this protein is Dihydroxy-acid dehydratase.